Reading from the N-terminus, the 170-residue chain is Putative 4-hydroxy-4-methyl-2-oxoglutarate aldolase (170 aa).

Residues 85–88 (GDMI) and Arg107 each bind substrate. Asp108 is a binding site for a divalent metal cation.

It belongs to the class II aldolase/RraA-like family. Homotrimer. Requires a divalent metal cation as cofactor.

It catalyses the reaction 4-hydroxy-4-methyl-2-oxoglutarate = 2 pyruvate. The enzyme catalyses oxaloacetate + H(+) = pyruvate + CO2. In terms of biological role, catalyzes the aldol cleavage of 4-hydroxy-4-methyl-2-oxoglutarate (HMG) into 2 molecules of pyruvate. Also contains a secondary oxaloacetate (OAA) decarboxylase activity due to the common pyruvate enolate transition state formed following C-C bond cleavage in the retro-aldol and decarboxylation reactions. The sequence is that of Putative 4-hydroxy-4-methyl-2-oxoglutarate aldolase from Acinetobacter baylyi (strain ATCC 33305 / BD413 / ADP1).